The sequence spans 394 residues: Putative 8-amino-7-oxononanoate synthase (394 aa).

R23 provides a ligand contact to substrate. 110–111 (GY) contributes to the pyridoxal 5'-phosphate binding site. H135 contributes to the substrate binding site. Pyridoxal 5'-phosphate-binding positions include S182, 207 to 210 (DEAH), and 238 to 241 (TFSK). At K241 the chain carries N6-(pyridoxal phosphate)lysine. T355 contributes to the substrate binding site.

Belongs to the class-II pyridoxal-phosphate-dependent aminotransferase family. BioF subfamily. As to quaternary structure, homodimer. Pyridoxal 5'-phosphate is required as a cofactor.

It catalyses the reaction 6-carboxyhexanoyl-[ACP] + L-alanine + H(+) = (8S)-8-amino-7-oxononanoate + holo-[ACP] + CO2. It functions in the pathway cofactor biosynthesis; biotin biosynthesis. Its function is as follows. Catalyzes the decarboxylative condensation of pimeloyl-[acyl-carrier protein] and L-alanine to produce 8-amino-7-oxononanoate (AON), [acyl-carrier protein], and carbon dioxide. The chain is Putative 8-amino-7-oxononanoate synthase (bioF) from Bacillus cereus (strain Q1).